The primary structure comprises 224 residues: Ribonuclease T (224 aa).

Residues 32–206 form the Exonuclease domain; that stretch reads VVVDVETGGF…YDTEKTAELF (175 aa). Mg(2+) contacts are provided by aspartate 35, glutamate 37, histidine 193, and aspartate 198. The active-site Proton donor/acceptor is the histidine 193.

This sequence belongs to the RNase T family. As to quaternary structure, homodimer. Requires Mg(2+) as cofactor.

In terms of biological role, trims short 3' overhangs of a variety of RNA species, leaving a one or two nucleotide 3' overhang. Responsible for the end-turnover of tRNA: specifically removes the terminal AMP residue from uncharged tRNA (tRNA-C-C-A). Also appears to be involved in tRNA biosynthesis. This is Ribonuclease T from Pseudomonas paraeruginosa (strain DSM 24068 / PA7) (Pseudomonas aeruginosa (strain PA7)).